A 204-amino-acid polypeptide reads, in one-letter code: Putative AgrB-like protein (204 aa).

4 helical membrane-spanning segments follow: residues 40–60, 87–107, 111–131, and 156–176; these read IILI…ATGL, LNCT…FQNI, NWIV…FAPA, and LILT…LIMV.

Belongs to the AgrB family.

The protein resides in the cell membrane. May be involved in the proteolytic processing of a quorum sensing system signal molecule precursor. The sequence is that of Putative AgrB-like protein from Listeria welshimeri serovar 6b (strain ATCC 35897 / DSM 20650 / CCUG 15529 / CIP 8149 / NCTC 11857 / SLCC 5334 / V8).